We begin with the raw amino-acid sequence, 526 residues long: Amino acid transporter heavy chain SLC3A2 (526 aa).

The disordered stretch occupies residues 1–31 (MSQDTEVDMKDVELNELEPEKQPMNAADGAA). Residues 1-75 (MSQDTEVDMK…AGSPGWVRTR (75 aa)) lie on the Cytoplasmic side of the membrane. Ser-2 carries the phosphoserine modification. The residue at position 5 (Thr-5) is a Phosphothreonine. A compositionally biased stretch (basic and acidic residues) spans 7–21 (VDMKDVELNELEPEK). Residue Lys-42 forms a Glycyl lysine isopeptide (Lys-Gly) (interchain with G-Cter in ubiquitin) linkage. Ser-58 is subject to Phosphoserine. Lys-59 is covalently cross-linked (Glycyl lysine isopeptide (Lys-Gly) (interchain with G-Cter in SUMO2)). A helical; Signal-anchor for type II membrane protein transmembrane segment spans residues 76–99 (WALLLLFWLGWLGMLAGAVVIIVR). Over 100–526 (APRCRELPVQ…GLLLQFPFVA (427 aa)) the chain is Extracellular. N-linked (GlcNAc...) asparagine glycans are attached at residues Asn-166, Asn-259, and Asn-263. Ser-300 carries the post-translational modification Phosphoserine. N-linked (GlcNAc...) asparagine glycosylation is present at Asn-301. Ser-302 carries the post-translational modification Phosphoserine. Residues Asn-318, Asn-385, and Asn-399 are each glycosylated (N-linked (GlcNAc...) asparagine). Ser-420 carries the phosphoserine modification. A glycan (N-linked (GlcNAc...) asparagine) is linked at Asn-509.

The protein belongs to the SLC3A transporter family. In terms of assembly, disulfide-linked heterodimer with a non-glycosylated light chain (SLC7A5, SLC7A6, SLC7A7, SLC7A8, SLC7A10 or SLC7A11). Interacts with TLCD3A/CT120 and ICAM1. Constitutively and specifically associates with beta-1 integrins (alpha-2/beta-1, alpha-3/beta-1, alpha-5/beta-1 and alpha-6/beta-1), but minimally with alpha-4/beta-1. Interacts with LAPTM4B; recruits SLC3A2 and SLC7A5 to lysosomes to promote leucine uptake into these organelles and is required for mTORC1 activation. Phosphorylation on Ser-300 or Ser-302 and on Ser-420 by ecto-protein kinases favors heterotypic cell-cell interactions. Post-translationally, N-glycosylated; N-glycosylation is crucial for trafficking and stability of SLC3A2 to the plasma membrane. Detected on the surface of embryonic epithelial cells in the epidermis, thymus, kidney, intestine, brain choroid plexus, and in retina. Detected in adult and embryonic brain, spleen, kidney, intestine and liver, and in adult testis (at protein level). Observed in all adult tissues tested with strongest expression in kidney, small intestine, spleen, thymus and liver. Moderate expression in brain, stomach, heart, testis, lung, skin, pancreas and skeletal muscle. In brain expressed on capillary endothelia in cerebral cortex.

Its subcellular location is the apical cell membrane. It is found in the cell membrane. The protein localises to the cell junction. The protein resides in the lysosome membrane. It localises to the melanosome. Its subcellular location is the basolateral cell membrane. In terms of biological role, acts as a chaperone that facilitates biogenesis and trafficking of functional transporters heterodimers to the plasma membrane. Forms heterodimer with SLC7 family transporters (SLC7A5, SLC7A6, SLC7A7, SLC7A8, SLC7A10 and SLC7A11), a group of amino-acid antiporters. Heterodimers function as amino acids exchangers, the specificity of the substrate depending on the SLC7A subunit. Heterodimers SLC3A2/SLC7A6 or SLC3A2/SLC7A7 mediate the uptake of dibasic amino acids. Heterodimer SLC3A2/SLC7A11 functions as an antiporter by mediating the exchange of extracellular anionic L-cystine and intracellular L-glutamate across the cellular plasma membrane. SLC3A2/SLC7A10 translocates small neutral L- and D-amino acids across the plasma membrane. SLC3A2/SLC75 or SLC3A2/SLC7A8 translocates neutral amino acids with broad specificity, thyroid hormones and L-DOPA. SLC3A2 is essential for plasma membrane localization, stability, and the transport activity of SLC7A5 and SLC7A8. When associated with LAPTM4B, the heterodimer SLC7A5 is recruited to lysosomes to promote leucine uptake into these organelles, and thereby mediates mTORC1 activation. Modulates integrin-related signaling and is essential for integrin-dependent cell spreading, migration and tumor progression. The polypeptide is Amino acid transporter heavy chain SLC3A2 (Mus musculus (Mouse)).